Reading from the N-terminus, the 430-residue chain is Long-chain specific acyl-CoA dehydrogenase, mitochondrial (430 aa).

The transit peptide at 1–30 directs the protein to the mitochondrion; sequence MAARLLRGSLRFLGGHCAARPLPALRCSHS. The residue at position 42 (K42) is an N6-acetyllysine. 2 positions are modified to phosphoserine: S54 and S55. An N6-acetyllysine; alternate mark is found at K66 and K81. K66 and K81 each carry N6-succinyllysine; alternate. N6-acetyllysine is present on residues K92 and K95. K165 is subject to N6-succinyllysine. FAD-binding positions include 170–179 and 203–205; these read IAMTELGAGS and FIS. A substrate-binding site is contributed by S179. Substrate is bound at residue 227–228; that stretch reads AR. The residue at position 240 (K240) is an N6-succinyllysine. N6-acetyllysine; alternate occurs at positions 254 and 279. Residues K254 and K279 each carry the N6-succinyllysine; alternate modification. Substrate contacts are provided by residues Y282 and 289–292; that span reads PQER. Residue E291 is the Proton acceptor of the active site. An FAD-binding site is contributed by R317. N6-acetyllysine is present on K318. The residue at position 322 (K322) is an N6-acetyllysine; alternate. K322 is modified (N6-succinyllysine; alternate). Q328 contributes to the FAD binding site. K358 is subject to N6-acetyllysine. S362 is modified (phosphoserine). 385-389 is a binding site for FAD; it reads QLHGG. 412–413 is a substrate binding site; sequence GG. Residue 414 to 416 participates in FAD binding; sequence TNE.

The protein belongs to the acyl-CoA dehydrogenase family. As to quaternary structure, homotetramer. It depends on FAD as a cofactor. Post-translationally, acetylation at Lys-318 and Lys-322 in proximity of the cofactor-binding sites strongly reduces catalytic activity. These sites are deacetylated by SIRT3.

It is found in the mitochondrion matrix. It carries out the reaction a long-chain 2,3-saturated fatty acyl-CoA + oxidized [electron-transfer flavoprotein] + H(+) = a long-chain (2E)-enoyl-CoA + reduced [electron-transfer flavoprotein]. The enzyme catalyses hexanoyl-CoA + oxidized [electron-transfer flavoprotein] + H(+) = (2E)-hexenoyl-CoA + reduced [electron-transfer flavoprotein]. The catalysed reaction is octanoyl-CoA + oxidized [electron-transfer flavoprotein] + H(+) = (2E)-octenoyl-CoA + reduced [electron-transfer flavoprotein]. It catalyses the reaction decanoyl-CoA + oxidized [electron-transfer flavoprotein] + H(+) = (2E)-decenoyl-CoA + reduced [electron-transfer flavoprotein]. It carries out the reaction dodecanoyl-CoA + oxidized [electron-transfer flavoprotein] + H(+) = (2E)-dodecenoyl-CoA + reduced [electron-transfer flavoprotein]. The enzyme catalyses tetradecanoyl-CoA + oxidized [electron-transfer flavoprotein] + H(+) = (2E)-tetradecenoyl-CoA + reduced [electron-transfer flavoprotein]. The catalysed reaction is oxidized [electron-transfer flavoprotein] + hexadecanoyl-CoA + H(+) = (2E)-hexadecenoyl-CoA + reduced [electron-transfer flavoprotein]. It catalyses the reaction octadecanoyl-CoA + oxidized [electron-transfer flavoprotein] + H(+) = (2E)-octadecenoyl-CoA + reduced [electron-transfer flavoprotein]. It carries out the reaction eicosanoyl-CoA + oxidized [electron-transfer flavoprotein] + H(+) = (2E)-eicosenoyl-CoA + reduced [electron-transfer flavoprotein]. The enzyme catalyses docosanoyl-CoA + oxidized [electron-transfer flavoprotein] + H(+) = (2E)-docosenoyl-CoA + reduced [electron-transfer flavoprotein]. The catalysed reaction is tetracosanoyl-CoA + oxidized [electron-transfer flavoprotein] + H(+) = (2E)-tetracosenoyl-CoA + reduced [electron-transfer flavoprotein]. It catalyses the reaction (5E)-tetradecenoyl-CoA + oxidized [electron-transfer flavoprotein] + H(+) = (2E,5E)-tetradecadienoyl-CoA + reduced [electron-transfer flavoprotein]. It carries out the reaction (5Z)-tetradecenoyl-CoA + oxidized [electron-transfer flavoprotein] + H(+) = (2E,5Z)-tetradecadienoyl-CoA + reduced [electron-transfer flavoprotein]. The enzyme catalyses oxidized [electron-transfer flavoprotein] + (9Z)-octadecenoyl-CoA + H(+) = (2E,9Z)-octadecadienoyl-CoA + reduced [electron-transfer flavoprotein]. It functions in the pathway lipid metabolism; mitochondrial fatty acid beta-oxidation. Functionally, long-chain specific acyl-CoA dehydrogenase is one of the acyl-CoA dehydrogenases that catalyze the first step of mitochondrial fatty acid beta-oxidation, an aerobic process breaking down fatty acids into acetyl-CoA and allowing the production of energy from fats. The first step of fatty acid beta-oxidation consists in the removal of one hydrogen from C-2 and C-3 of the straight-chain fatty acyl-CoA thioester, resulting in the formation of trans-2-enoyl-CoA. Among the different mitochondrial acyl-CoA dehydrogenases, long-chain specific acyl-CoA dehydrogenase can act on saturated and unsaturated acyl-CoAs with 6 to 24 carbons with a preference for 8 to 18 carbons long primary chains. The protein is Long-chain specific acyl-CoA dehydrogenase, mitochondrial of Macaca fascicularis (Crab-eating macaque).